The following is an 84-amino-acid chain: Putative defensin-like protein 101 (84 aa).

Residues 1 to 27 form the signal peptide; the sequence is MDITKNIVTLLLVVLFPILFYYNNVLA. Cystine bridges form between C39–C81, C43–C67, C52–C79, and C56–C80.

This sequence belongs to the DEFL family.

It localises to the secreted. The protein is Putative defensin-like protein 101 of Arabidopsis thaliana (Mouse-ear cress).